Consider the following 400-residue polypeptide: Homoserine O-acetyltransferase (400 aa).

Positions 64-374 constitute an AB hydrolase-1 domain; sequence NAILVCHALT…DKGHDAFLLD (311 aa). Ser-169 (nucleophile) is an active-site residue. Residue Arg-239 participates in substrate binding. Catalysis depends on residues Asp-335 and His-368. Asp-369 lines the substrate pocket.

Belongs to the AB hydrolase superfamily. MetX family. As to quaternary structure, homodimer.

The protein resides in the cytoplasm. The enzyme catalyses L-homoserine + acetyl-CoA = O-acetyl-L-homoserine + CoA. The protein operates within amino-acid biosynthesis; L-methionine biosynthesis via de novo pathway; O-acetyl-L-homoserine from L-homoserine: step 1/1. Transfers an acetyl group from acetyl-CoA to L-homoserine, forming acetyl-L-homoserine. This chain is Homoserine O-acetyltransferase, found in Rhodopseudomonas palustris (strain ATCC BAA-98 / CGA009).